The chain runs to 426 residues: Glutamate-1-semialdehyde 2,1-aminomutase (426 aa).

Position 265 is an N6-(pyridoxal phosphate)lysine (K265).

The protein belongs to the class-III pyridoxal-phosphate-dependent aminotransferase family. HemL subfamily. Homodimer. Pyridoxal 5'-phosphate is required as a cofactor.

Its subcellular location is the cytoplasm. It catalyses the reaction (S)-4-amino-5-oxopentanoate = 5-aminolevulinate. Its pathway is porphyrin-containing compound metabolism; protoporphyrin-IX biosynthesis; 5-aminolevulinate from L-glutamyl-tRNA(Glu): step 2/2. This chain is Glutamate-1-semialdehyde 2,1-aminomutase, found in Sodalis glossinidius (strain morsitans).